Reading from the N-terminus, the 219-residue chain is Elongation factor Ts (219 aa).

Residues 82–85 (TDFV) are involved in Mg(2+) ion dislocation from EF-Tu.

This sequence belongs to the EF-Ts family.

It localises to the cytoplasm. Its function is as follows. Associates with the EF-Tu.GDP complex and induces the exchange of GDP to GTP. It remains bound to the aminoacyl-tRNA.EF-Tu.GTP complex up to the GTP hydrolysis stage on the ribosome. This Anaeromyxobacter sp. (strain K) protein is Elongation factor Ts.